A 931-amino-acid chain; its full sequence is Protein unc-45 homolog B (931 aa).

TPR repeat units follow at residues 6 to 39 (AVQL…TKDK), 43 to 76 (ATLY…NSSD), and 77 to 110 (IKAL…EPRN). ARM repeat units follow at residues 169–208 (EAGA…GMCS), 211–250 (QARA…AIID), and 751–790 (DKLR…NMVL).

In terms of assembly, interacts with HSP90 in an ATP-independent manner. Interacts with UBE4B; the interaction may target UNC45B for proteasomal degradation. Expressed in eye lens tissues. Expressed in muscle (at protein level).

Its subcellular location is the cytoplasm. The protein localises to the myofibril. The protein resides in the sarcomere. It localises to the z line. It is found in the a band. Its subcellular location is the perinuclear region. The protein localises to the cytosol. In terms of biological role, acts as a co-chaperone for HSP90 and is required for proper folding of the myosin motor domain. Plays a role in sarcomere formation during muscle cell development. Is necessary for normal early lens development. The chain is Protein unc-45 homolog B from Homo sapiens (Human).